The primary structure comprises 499 residues: Cysteine--tRNA ligase (499 aa).

Residue cysteine 29 coordinates Zn(2+). Residues 31 to 41 (VTVYDLCHLGH) carry the 'HIGH' region motif. Positions 213, 238, and 242 each coordinate Zn(2+). A 'KMSKS' region motif is present at residues 270–274 (KMSKS). Residue lysine 273 participates in ATP binding.

This sequence belongs to the class-I aminoacyl-tRNA synthetase family. As to quaternary structure, monomer. Zn(2+) is required as a cofactor.

It is found in the cytoplasm. It carries out the reaction tRNA(Cys) + L-cysteine + ATP = L-cysteinyl-tRNA(Cys) + AMP + diphosphate. This Prochlorococcus marinus (strain MIT 9303) protein is Cysteine--tRNA ligase.